The chain runs to 117 residues: uncharacterized protein (117 aa).

An N-terminal signal peptide occupies residues 1 to 23 (MVSEAEFMAALAKFAETSATASA).

This is an uncharacterized protein from Archaeoglobus fulgidus (strain ATCC 49558 / DSM 4304 / JCM 9628 / NBRC 100126 / VC-16).